Here is a 160-residue protein sequence, read N- to C-terminus: Putative pre-16S rRNA nuclease (160 aa).

This sequence belongs to the YqgF nuclease family.

The protein localises to the cytoplasm. In terms of biological role, could be a nuclease involved in processing of the 5'-end of pre-16S rRNA. The chain is Putative pre-16S rRNA nuclease from Rhodopseudomonas palustris (strain HaA2).